The sequence spans 74 residues: Kappa-stichotoxin-Shd5a (74 aa).

Residues 1-22 (MKFQVIAAVLLIAFCLCVVVTA) form the signal peptide. Residues 23-39 (RMELQDVEDVENGFQKR) constitute a propeptide that is removed on maturation. The ShKT domain maps to 42–74 (CIDTIPQSRCTAFQCKHSMKYRLSFCRKTCGTC). 3 disulfide bridges follow: Cys42–Cys74, Cys51–Cys67, and Cys56–Cys71.

It belongs to the sea anemone type 1 potassium channel toxin family. Type 1a subfamily.

Its subcellular location is the secreted. It localises to the nematocyst. In terms of biological role, inhibits voltage-gated potassium channels (Kv) with higher potency for Kv1.1/KCNA1 and Kv1.3/KCNA3. This is Kappa-stichotoxin-Shd5a from Stichodactyla haddoni (Saddle carpet anemone).